Reading from the N-terminus, the 416-residue chain is Multifunctional CCA protein (416 aa).

ATP contacts are provided by G8 and R11. Residues G8 and R11 each coordinate CTP. Residues D21 and D23 each contribute to the Mg(2+) site. 3 residues coordinate ATP: R91, R137, and R140. 3 residues coordinate CTP: R91, R137, and R140. An HD domain is found at 228–329 (TGLHTMMVLA…IKLFDKADFW (102 aa)).

This sequence belongs to the tRNA nucleotidyltransferase/poly(A) polymerase family. Bacterial CCA-adding enzyme type 1 subfamily. Monomer. Can also form homodimers and oligomers. The cofactor is Mg(2+). Ni(2+) serves as cofactor.

It carries out the reaction a tRNA precursor + 2 CTP + ATP = a tRNA with a 3' CCA end + 3 diphosphate. The catalysed reaction is a tRNA with a 3' CCA end + 2 CTP + ATP = a tRNA with a 3' CCACCA end + 3 diphosphate. Functionally, catalyzes the addition and repair of the essential 3'-terminal CCA sequence in tRNAs without using a nucleic acid template. Adds these three nucleotides in the order of C, C, and A to the tRNA nucleotide-73, using CTP and ATP as substrates and producing inorganic pyrophosphate. tRNA 3'-terminal CCA addition is required both for tRNA processing and repair. Also involved in tRNA surveillance by mediating tandem CCA addition to generate a CCACCA at the 3' terminus of unstable tRNAs. While stable tRNAs receive only 3'-terminal CCA, unstable tRNAs are marked with CCACCA and rapidly degraded. The protein is Multifunctional CCA protein of Shewanella sp. (strain MR-7).